The following is a 561-amino-acid chain: Nucleoprotein (561 aa).

Positions 53–237 (MRKDKRSEAD…ITQEPAQINI (185 aa)) are binding site for the cap structure m7GTP. Mn(2+)-binding residues include D380 and E382. Residues E390, C497, H500, and C521 each contribute to the Zn(2+) site. D525 lines the Mn(2+) pocket.

Belongs to the arenaviridae nucleocapsid protein family. As to quaternary structure, homomultimerizes to form the nucleocapsid. Binds to viral genomic RNA. Interacts with glycoprotein G2. Interacts with protein Z; this interaction probably directs the encapsidated genome to budding sites. Interacts with protein L; this interaction does not interfere with Z-L interaction. Interacts with host IKBKE (via Protein kinase domain); the interaction inhibits IKBKE kinase activity.

It localises to the virion. It is found in the host cytoplasm. Encapsidates the genome, protecting it from nucleases. The encapsidated genomic RNA is termed the nucleocapsid (NC). Serves as template for viral transcription and replication. The increased presence of protein N in host cell does not seem to trigger the switch from transcription to replication as observed in other negative strain RNA viruses. Through the interaction with host IKBKE, strongly inhibits the phosphorylation and nuclear translocation of host IRF3, a protein involved in interferon activation pathway, leading to the inhibition of interferon-beta and IRF3-dependent promoters activation. Also encodes a functional 3'-5' exoribonuclease that degrades preferentially dsRNA substrates and thereby participates in the suppression of interferon induction. This Allpahuayo mammarenavirus (isolate Rat/Peru/CLHP-2472/1997) (ALLV) protein is Nucleoprotein.